Reading from the N-terminus, the 534-residue chain is NAD(P)H-quinone oxidoreductase chain 4 (534 aa).

14 helical membrane passes run 12-32, 44-64, 96-116, 120-140, 144-164, 176-196, 220-240, 251-271, 285-305, 314-334, 340-360, 384-404, 425-445, and 472-492; these read FPWL…IPFF, FALS…INGF, MPLI…AWPV, PKLF…VFAV, LLFF…LAIW, FIIY…AMGF, ILCY…VPLH, TAPV…YALL, FAPL…LTSF, IAYS…SFSS, AMLQ…LVGA, FALW…SGFV, VVMA…LLSM, and VYII…PRLV.

The protein belongs to the complex I subunit 4 family.

The protein localises to the cellular thylakoid membrane. The catalysed reaction is a plastoquinone + NADH + (n+1) H(+)(in) = a plastoquinol + NAD(+) + n H(+)(out). It catalyses the reaction a plastoquinone + NADPH + (n+1) H(+)(in) = a plastoquinol + NADP(+) + n H(+)(out). In terms of biological role, NDH-1 shuttles electrons from NAD(P)H, via FMN and iron-sulfur (Fe-S) centers, to quinones in the respiratory chain. The immediate electron acceptor for the enzyme in this species is believed to be plastoquinone. Couples the redox reaction to proton translocation (for every two electrons transferred, four hydrogen ions are translocated across the cytoplasmic membrane), and thus conserves the redox energy in a proton gradient. The sequence is that of NAD(P)H-quinone oxidoreductase chain 4 from Prochlorococcus marinus (strain AS9601).